We begin with the raw amino-acid sequence, 582 residues long: MLFGELAQYFERIEKTTKRNEMMEILADLFRKVDKEEIDKIIYLLNGRVAPDYEKIEFGMSDKLVLRAMALALKIPLLELERSYKEVGDLGELVVKYSKNEGKDLTVVETFNTLYDIANLSGEGSVDAKVNRLAFLINSLTPQGGKYLVRIVLGKLRLGVGEPTIMDALSFAKVKDKGLRPFIERAFNITSDLGYVAKVFWEGGVEALKRIKVQVGRPIRMALAERVSRAEEIIKRLGKCAVEPKFDGFRCQIHKKENSVRIFSRNLEDNTYMFPDLVEAVLKQFPDRDVIIEGEAISYNPETGEFYPFQVTVQRKRKYNISEMVELYPLQLFAFDILYLDGEDTTSLPYIRRRQKLEEALVEGEKISITKNIITNDPKEIQSFFEECITEGLEGIVAKRLDAPYQAGMRNFNWIKLKRSYQGHLADTVDCVILGYFKGRGHRAKFGIGALLVGVYDDERDLFKTIAKIGTGPTEEEWVKFREILDEIKVEKRPNNVESFIEPDVWVEPKYVVVVQADEITRSPVHTCGRELDGLGYALRFPRVQGFVREDKGPYDATTVKEILEMFRNQKKEKVEEDSDLL.

An ATP-binding site is contributed by Glu-243. Lys-245 (N6-AMP-lysine intermediate) is an active-site residue. Residues Arg-250, Arg-265, Glu-295, Phe-335, Arg-410, and Lys-416 each coordinate ATP.

It belongs to the ATP-dependent DNA ligase family. The cofactor is Mg(2+).

The catalysed reaction is ATP + (deoxyribonucleotide)n-3'-hydroxyl + 5'-phospho-(deoxyribonucleotide)m = (deoxyribonucleotide)n+m + AMP + diphosphate.. Its function is as follows. DNA ligase that seals nicks in double-stranded DNA during DNA replication, DNA recombination and DNA repair. The chain is Probable DNA ligase from Dictyoglomus thermophilum (strain ATCC 35947 / DSM 3960 / H-6-12).